Reading from the N-terminus, the 145-residue chain is 3-hydroxyacyl-[acyl-carrier-protein] dehydratase FabZ (145 aa).

The active site involves His-49.

This sequence belongs to the thioester dehydratase family. FabZ subfamily.

The protein localises to the cytoplasm. The catalysed reaction is a (3R)-hydroxyacyl-[ACP] = a (2E)-enoyl-[ACP] + H2O. In terms of biological role, involved in unsaturated fatty acids biosynthesis. Catalyzes the dehydration of short chain beta-hydroxyacyl-ACPs and long chain saturated and unsaturated beta-hydroxyacyl-ACPs. This is 3-hydroxyacyl-[acyl-carrier-protein] dehydratase FabZ from Rickettsia conorii (strain ATCC VR-613 / Malish 7).